The chain runs to 705 residues: Elongation factor G (705 aa).

The region spanning 8-290 (AYYRNIGISA…AVIEYLPAPT (283 aa)) is the tr-type G domain. Residues 17 to 24 (AHIDAGKT), 88 to 92 (DTPGH), and 142 to 145 (NKMD) contribute to the GTP site.

The protein belongs to the TRAFAC class translation factor GTPase superfamily. Classic translation factor GTPase family. EF-G/EF-2 subfamily.

It localises to the cytoplasm. Functionally, catalyzes the GTP-dependent ribosomal translocation step during translation elongation. During this step, the ribosome changes from the pre-translocational (PRE) to the post-translocational (POST) state as the newly formed A-site-bound peptidyl-tRNA and P-site-bound deacylated tRNA move to the P and E sites, respectively. Catalyzes the coordinated movement of the two tRNA molecules, the mRNA and conformational changes in the ribosome. The protein is Elongation factor G of Baumannia cicadellinicola subsp. Homalodisca coagulata.